We begin with the raw amino-acid sequence, 164 residues long: Ribosome maturation factor RimP (164 aa).

This sequence belongs to the RimP family.

It localises to the cytoplasm. In terms of biological role, required for maturation of 30S ribosomal subunits. This Thermodesulfovibrio yellowstonii (strain ATCC 51303 / DSM 11347 / YP87) protein is Ribosome maturation factor RimP.